The sequence spans 491 residues: Trigger factor (491 aa).

A PPIase FKBP-type domain is found at 169–254; the sequence is GDRVTIDYLG…VKDVAAAAPI (86 aa). The segment at 433 to 491 is disordered; it reads KTVSKDELMAEDEAEDKPAKKAPAKKKAAAKAEAGEGEEAAAPKKKAPAKKKAADDSAE. The span at 452-461 shows a compositional bias: basic residues; it reads KKAPAKKKAA.

The protein belongs to the FKBP-type PPIase family. Tig subfamily.

Its subcellular location is the cytoplasm. It catalyses the reaction [protein]-peptidylproline (omega=180) = [protein]-peptidylproline (omega=0). Its function is as follows. Involved in protein export. Acts as a chaperone by maintaining the newly synthesized protein in an open conformation. Functions as a peptidyl-prolyl cis-trans isomerase. The chain is Trigger factor from Sinorhizobium fredii (strain NBRC 101917 / NGR234).